The sequence spans 184 residues: Photosystem I assembly protein Ycf3 (184 aa).

TPR repeat units lie at residues 31–64, 68–101, and 131–164; these read AFAYYKAGMAAQAEGDYAEALENYYESLYLDEDQ, SYTLYNIGLIYAKNENYPRALEYYHQAVSLNSNL, and MEISEEYEYIELAKGLFDKAAEYWYQALKLAPDN.

The protein belongs to the Ycf3 family.

The protein resides in the plastid. It is found in the chloroplast thylakoid membrane. In terms of biological role, essential for the assembly of the photosystem I (PSI) complex. May act as a chaperone-like factor to guide the assembly of the PSI subunits. The polypeptide is Photosystem I assembly protein Ycf3 (Thalassiosira pseudonana (Marine diatom)).